The sequence spans 339 residues: DNA-directed RNA polymerase RPB7 homolog (339 aa).

It belongs to the Asfivirus DNA-directed RNA polymerase RPB7 homolog family. Part of the viral DNA-directed RNA polymerase that consists of 8 polII-like subunits (RPB1, RPB2, RPB3, RPB5, RPB6, RPB7, RPB9, RPB10), a capping enzyme and a termination factor.

The protein resides in the host cytoplasm. The protein localises to the virion. In terms of biological role, component of the DNA-directed RNA polymerase (RNAP) that catalyzes the transcription in the cytoplasm of viral DNA into RNA using the four ribonucleoside triphosphates as substrates. This chain is DNA-directed RNA polymerase RPB7 homolog, found in Ornithodoros (relapsing fever ticks).